A 48-amino-acid polypeptide reads, in one-letter code: Large ribosomal subunit protein bL32 (48 aa).

The disordered stretch occupies residues 24–48 (LPMPIKDKDGSYKMPHRVNPVTKEY).

It belongs to the bacterial ribosomal protein bL32 family.

In Campylobacter lari (strain RM2100 / D67 / ATCC BAA-1060), this protein is Large ribosomal subunit protein bL32.